The sequence spans 29 residues: Glucagon (29 aa).

A Phosphoserine modification is found at Ser-2.

The protein belongs to the glucagon family.

Its subcellular location is the secreted. Its function is as follows. Glucagon plays a key role in glucose metabolism and homeostasis. Regulates blood glucose by increasing gluconeogenesis and decreasing glycolysis. This Chinchilla chinchilla (Short-tailed chinchilla) protein is Glucagon (GCG).